We begin with the raw amino-acid sequence, 199 residues long: Inner membrane-spanning protein YciB (199 aa).

The next 6 membrane-spanning stretches (helical) occupy residues 4-24 (FIDFIPLILFFIVYKLEPRIV), 36-56 (IFSATAVLILASLLVYGTLFL), 64-84 (GQWITLLACLVFGGMTLTFQS), 90-110 (WKAPVVNWLFALGFAASHFIG), 135-155 (LAWVAFFVFSGCANLFVAFTF), and 162-182 (FKVFGSLGMTVLFLVGQGVFL).

The protein belongs to the YciB family.

The protein resides in the cell inner membrane. Functionally, plays a role in cell envelope biogenesis, maintenance of cell envelope integrity and membrane homeostasis. In Azotobacter vinelandii (strain DJ / ATCC BAA-1303), this protein is Inner membrane-spanning protein YciB.